A 654-amino-acid polypeptide reads, in one-letter code: MEKRGPKRRQEAAHLSCELCRERKVKCDKLDPCTNCSSAGVICVPVRRPRLPRGAHAQRLRRISPEDPEAPIQIDIASPADAGTIADDDLKERIRRLEALVDSMRSSNHVSKQLIKNFQTNKDQEAQDTIESTLNRIDEDSLLIKGPRVHPSDGGLRILGLSGSSSPETGWASIIEDREVSMQLCQVYLLNVDPVIKILHRPSLEKWMLEGQRYLGLPEGHAAVESLGAAICYVAATSLTETQSWARFHTTKSSIVARARRACETTLEKSSPLLSPDVTTLQAFVLYLVARRSEDPSRAVWTLMAFAVRIAKALDLPRGIDDNFFGQQMRKRLWLAICLLDFQTSLSQPSEPLITVAEATSLFSPPRHINDSDFDPTTSHDIPDREGLTDTTFSLVSHHVQAAGRLLNFEPSVKDDGSRQQHVQNFEQRTLRLLLYCDPESTPYAWFTWHRIQCFVSGARLSAIRPLIHQHGGHPIPILDANEGTSILSLALNILEKVQLVHTDPRGEGFRWFVTVPWQPLAIAISECYICQDRSLVQRAWPIVEAAFQQHEATVSGSSKAISITLERLMCRVRGKLLPSLELSRPGEDLALVTEAPISTSPQKVDPLVFSLDSPLLIAGQEQLLDADQSWAAWEEVIASLHYDETGRADMFLS.

The zn(2)-C6 fungal-type DNA-binding region spans 17 to 43; it reads CELCRERKVKCDKLDPCTNCSSAGVIC.

The protein resides in the nucleus. In terms of biological role, transcription factor that specifically regulates the neosartoricin B biosynthesis gene cluster. This chain is C6 finger domain transcription factor nscR, found in Trichophyton verrucosum (strain HKI 0517).